The sequence spans 948 residues: PHD finger protein 14 (948 aa).

Residues 22–302 (DYDSSDDSDF…LSQSKSNEDS (281 aa)) form a disordered region. 2 positions are modified to phosphoserine: Ser26 and Ser29. Low complexity predominate over residues 36 to 47 (ASDSEGSGNGSE). A compositionally biased stretch (acidic residues) spans 60–71 (DSEENILEEELN). Residues 72–85 (EDIKVKEEQLKNSA) show a composition bias toward basic and acidic residues. Phosphoserine occurs at positions 84 and 91. Composition is skewed to basic and acidic residues over residues 95–110 (QLIK…NGER) and 117–139 (KEKE…EKAT). Over residues 140-174 (VSENVAASAAATTPATSPPAVNTSPSVPTTTTATE) the composition is skewed to low complexity. At Ser196 the chain carries Phosphoserine. 2 stretches are compositionally biased toward acidic residues: residues 199–212 (ELND…EDDN) and 233–256 (DGDN…EGND). Tyr206 is subject to Phosphotyrosine. At Ser208 the chain carries Phosphoserine. Position 287 is a phosphothreonine (Thr287). Positions 288-297 (NDSLTLSQSK) are enriched in polar residues. Phosphoserine occurs at positions 290, 294, 298, 302, and 308. A PHD-type 1 zinc finger spans residues 319-380 (ILICCVCLGD…PWFCDACKCG (62 aa)). The Zn(2+) site is built by Cys322, Cys325, Cys339, Cys342, His347, and Cys350. Ser359 is modified (phosphoserine). Zn(2+)-binding residues include Cys374, Cys377, Cys385, Cys388, His405, Cys408, Cys441, Cys444, Cys458, Cys463, His468, Cys471, Cys495, and His498. The segment at 382–415 (SPSCELCPNQDGIFKETDAGRWVHIVCALYVPGV) adopts a C2HC pre-PHD-type zinc-finger fold. The PHD-type 2 zinc-finger motif lies at 439–499 (KECSFCEDPR…PFFAYCKQHA (61 aa)). Ser530 bears the Phosphoserine mark. Residues 630 to 678 (MIQIQENMAEQKNIKDKLENEQEKLHVEYNKLCESLEELQNLNGKLRSE) are a coiled coil. Glu648 is covalently cross-linked (Glycyl lysine isopeptide (Lys-Gly) (interchain with G-Cter in SUMO2)). The residue at position 651 (Gln651) is a Phosphoserine. The segment at 725-779 (LYSCGICKKNHDQHLLLLCDTCKLHYHLGCLDPPLTRMPRKTKNSYWQCSECDQA) adopts a PHD-type 3 zinc-finger fold. Residues Cys728, Cys731, Cys743, Cys746, His751, Cys754, Cys773, and Cys776 each contribute to the Zn(2+) site. A phosphoserine mark is found at Ser781, Ser782, and Ser835. The tract at residues 811-862 (VPQDVPPEPKKIPIRNTRTRGRKRSFVPEEEKHEERVPRERRQRQSVLQKKP) is disordered. Residues 836–850 (FVPEEEKHEERVPRE) are compositionally biased toward basic and acidic residues. A PHD-type 4 zinc finger spans residues 868-921 (RTECATCKGTGDNENLVRCDECRLCYHFGCLDPPLKKSPKQTGYGWICQECDSS). Residues Cys871, Cys874, Cys886, Cys889, His894, Cys897, Cys915, and Cys918 each contribute to the Zn(2+) site. Residues 920 to 948 (SSSSKEDENEAERKNISQELNMEQKNPKK) are disordered. Positions 922–935 (SSKEDENEAERKNI) are enriched in basic and acidic residues. A compositionally biased stretch (polar residues) spans 936 to 948 (SQELNMEQKNPKK).

The protein resides in the nucleus. The protein localises to the chromosome. It localises to the cytoplasm. In terms of biological role, histone-binding protein. Binds preferentially to unmodified histone H3 but can also bind to a lesser extent to histone H3 trimethylated at 'Lys-9' (H3K9me3) as well as to histone H3 monomethylated at 'Lys-27' (H3K27ac) and trimethylated at 'Lys-27' (H3K27me3). Represses PDGFRA expression, thus playing a role in regulation of mesenchymal cell proliferation. Suppresses the expression of CDKN1A/p21 by reducing the level of trimethylation of histone H3 'Lys-4', leading to enhanced proliferation of germinal center B cells. In Homo sapiens (Human), this protein is PHD finger protein 14 (PHF14).